Reading from the N-terminus, the 85-residue chain is Coiled-coil-helix-coiled-coil-helix domain-containing protein 7 (85 aa).

Residues 13-55 enclose the CHCH domain; the sequence is SNPCLEETDASTKCMDDNRYEKDLCTPYFVKYKNCRKFWNGIM. Short sequence motifs (cx9C motif) lie at residues 16 to 26 and 37 to 47; these read CLEETDASTKC and CTPYFVKYKNC. 2 cysteine pairs are disulfide-bonded: C16–C47 and C26–C37.

It belongs to the CHCHD7 family.

It localises to the mitochondrion intermembrane space. In Xenopus tropicalis (Western clawed frog), this protein is Coiled-coil-helix-coiled-coil-helix domain-containing protein 7 (chchd7).